The primary structure comprises 425 residues: Palmitoyltransferase ZDHHC23 (425 aa).

The Cytoplasmic segment spans residues 1–81 (MKPVKKKKTE…RIPWLRGAKK (81 aa)). Residues 82-99 (VNISIVPPLVLLPVFLHV) form a helical membrane-spanning segment. Over 100–102 (ASW) the chain is Lumenal. Residues 103–125 (HFLLGVVVLTSLPMLALWYYYLT) form a helical membrane-spanning segment. The Cytoplasmic portion of the chain corresponds to 126-130 (HRRKE). The helical transmembrane segment at 131–151 (QTLFFLSLGLFSLGYMYYVFL) threads the bilayer. Topologically, residues 152–159 (REVVPQGR) are lumenal. The chain crosses the membrane as a helical span at residues 160 to 180 (VGPTQLALLTCGLLLILLALY). Residues 181–292 (RAKKNPGYLS…NSCVGESNHQ (112 aa)) lie on the Cytoplasmic side of the membrane. Positions 249-299 (DWCAKCQLVRPARAWHCRICGICVRRMDHHCVWINSCVGESNHQAFILALS) constitute a DHHC domain. The S-palmitoyl cysteine intermediate role is filled by cysteine 279. Residues 293–313 (AFILALSIFLLTSVYGISLTL) form a helical membrane-spanning segment. Over 314 to 343 (NTICRDRSLFTALFYCPGVYANYSSALSFT) the chain is Lumenal. A helical membrane pass occupies residues 344 to 364 (CVWYSVIITAGMAYIFLIQLI). The Cytoplasmic portion of the chain corresponds to 365-425 (NISYNVTERE…TVHTPAEDIV (61 aa)). Residues 422–425 (EDIV) form an interaction with NOS1 region.

This sequence belongs to the DHHC palmitoyltransferase family. Interacts with NOS1. Expressed in the brain.

Its subcellular location is the golgi apparatus membrane. It localises to the golgi apparatus. The protein resides in the trans-Golgi network membrane. The catalysed reaction is L-cysteinyl-[protein] + hexadecanoyl-CoA = S-hexadecanoyl-L-cysteinyl-[protein] + CoA. Functionally, palmitoyltransferase that could catalyze the addition of palmitate onto various protein substrates and be involved in a variety of cellular processes. Palmitoyltransferase that mediates palmitoylation of KCNMA1, regulating localization of KCNMA1 to the plasma membrane. May be involved in NOS1 regulation and targeting to the synaptic membrane. This chain is Palmitoyltransferase ZDHHC23, found in Mus musculus (Mouse).